The primary structure comprises 239 residues: Lactose-binding lectin-2 (239 aa).

Mn(2+) is bound by residues Glu-122 and Asp-124. Asp-124, Tyr-126, Asn-128, and Asp-131 together coordinate Ca(2+). Mn(2+) is bound by residues Asp-131 and His-137.

The protein belongs to the leguminous lectin family. As to quaternary structure, homotetramer. In terms of tissue distribution, seed.

The protein localises to the vacuole. Its subcellular location is the aleurone grain. In terms of biological role, lactose-binding lectin. Also binds derivatives of galactose, glucose, lactose, and mannose. Binds O-glycoproteins such as mucins more strongly than N-glycoproteins. Shows agglutinating activity towards rabbit erythrocytes. The protein is Lactose-binding lectin-2 of Cymbosema roseum (Dioclea purpurea).